The chain runs to 261 residues: ER membrane protein complex subunit 3 (261 aa).

Residues Ala-2–Leu-14 are Lumenal-facing. The chain crosses the membrane as a helical span at residues Trp-15–Leu-38. Residues Gln-39 to Asn-114 are Cytoplasmic-facing. A helical transmembrane segment spans residues Val-115–Met-130. Topologically, residues Thr-131–Ser-168 are lumenal. The helical transmembrane segment at Ala-169–Leu-187 threads the bilayer. The Cytoplasmic portion of the chain corresponds to Gly-188–Phe-261.

This sequence belongs to the EMC3 family. As to quaternary structure, component of the ER membrane protein complex (EMC).

The protein resides in the endoplasmic reticulum membrane. Part of the endoplasmic reticulum membrane protein complex (EMC) that enables the energy-independent insertion into endoplasmic reticulum membranes of newly synthesized membrane proteins. Preferentially accommodates proteins with transmembrane domains that are weakly hydrophobic or contain destabilizing features such as charged and aromatic residues. Involved in the cotranslational insertion of multi-pass membrane proteins in which stop-transfer membrane-anchor sequences become ER membrane spanning helices. It is also required for the post-translational insertion of tail-anchored/TA proteins in endoplasmic reticulum membranes. By mediating the proper cotranslational insertion of N-terminal transmembrane domains in an N-exo topology, with translocated N-terminus in the lumen of the ER, controls the topology of multi-pass membrane proteins like the G protein-coupled receptors. By regulating the insertion of various proteins in membranes, it is indirectly involved in many cellular processes. The protein is ER membrane protein complex subunit 3 (EMC3) of Homo sapiens (Human).